A 441-amino-acid polypeptide reads, in one-letter code: FBD-associated F-box protein At5g18780 (441 aa).

One can recognise an F-box domain in the interval 10-56 (EDRISILPEPLLCHILSFLRTKDSVRTSVLSSRWRDLWLWVPRLDLD). The FBD domain maps to 366 to 410 (LPRCLISSLASVDIESPITDKATELKLVSYLLENSTTLKKLVLRL).

The sequence is that of FBD-associated F-box protein At5g18780 from Arabidopsis thaliana (Mouse-ear cress).